The following is a 273-amino-acid chain: Flagellin FljO (273 aa).

It belongs to the bacterial flagellin family. As to quaternary structure, in C.crescentus, the flagellar filament is composed of multiple flagellins of 29 kDa; 27 kDa and 25 kDa.

It is found in the secreted. The protein resides in the bacterial flagellum. Its function is as follows. Flagellin is the subunit protein which polymerizes to form the filaments of bacterial flagella. This Caulobacter vibrioides (strain ATCC 19089 / CIP 103742 / CB 15) (Caulobacter crescentus) protein is Flagellin FljO (fljO).